A 111-amino-acid polypeptide reads, in one-letter code: MVMVTQKIYIELKAFDSYLLDRSARSIILTAKRSGARVNGPIFFPRRVAKFIVNRSTHVDKKSREQFEIRTHKRLISLPKANSTIIQALMSLQLPAGVDVKVKVIGGSNNG.

The protein belongs to the universal ribosomal protein uS10 family. As to quaternary structure, part of the 30S ribosomal subunit.

Involved in the binding of tRNA to the ribosomes. In Ehrlichia ruminantium (strain Welgevonden), this protein is Small ribosomal subunit protein uS10.